The sequence spans 250 residues: Pyridoxine 5'-phosphate synthase (250 aa).

Positions 8 and 19 each coordinate 3-amino-2-oxopropyl phosphate. Residue His-44 is the Proton acceptor of the active site. 2 residues coordinate 1-deoxy-D-xylulose 5-phosphate: Arg-46 and His-51. Glu-76 functions as the Proton acceptor in the catalytic mechanism. Position 106 (Thr-106) interacts with 1-deoxy-D-xylulose 5-phosphate. The active-site Proton donor is His-200. 3-amino-2-oxopropyl phosphate contacts are provided by residues Asp-201 and 223–224 (GH).

It belongs to the PNP synthase family. As to quaternary structure, homooctamer; tetramer of dimers.

Its subcellular location is the cytoplasm. The enzyme catalyses 3-amino-2-oxopropyl phosphate + 1-deoxy-D-xylulose 5-phosphate = pyridoxine 5'-phosphate + phosphate + 2 H2O + H(+). The protein operates within cofactor biosynthesis; pyridoxine 5'-phosphate biosynthesis; pyridoxine 5'-phosphate from D-erythrose 4-phosphate: step 5/5. Its function is as follows. Catalyzes the complicated ring closure reaction between the two acyclic compounds 1-deoxy-D-xylulose-5-phosphate (DXP) and 3-amino-2-oxopropyl phosphate (1-amino-acetone-3-phosphate or AAP) to form pyridoxine 5'-phosphate (PNP) and inorganic phosphate. In Allorhizobium ampelinum (strain ATCC BAA-846 / DSM 112012 / S4) (Agrobacterium vitis (strain S4)), this protein is Pyridoxine 5'-phosphate synthase.